Reading from the N-terminus, the 253-residue chain is Phosphoglycerate mutase 2 (253 aa).

T3 is modified (phosphothreonine). Substrate is bound by residues 10–17, 23–24, R62, 89–92, K100, and 116–117; these read RHGESLWN, CG, ERHY, and RR. The active-site Tele-phosphohistidine intermediate is the H11. At S14 the chain carries Phosphoserine. Residue E89 is the Proton donor/acceptor of the active site. The residue at position 118 (S118) is a Phosphoserine. At T121 the chain carries Phosphothreonine. A phosphotyrosine mark is found at Y132 and Y133. Position 135 is a phosphoserine (S135). Position 152 is a phosphothreonine (T152). 187 to 188 contributes to the substrate binding site; sequence GN.

The protein belongs to the phosphoglycerate mutase family. BPG-dependent PGAM subfamily. In terms of assembly, homodimer. Interacts with ENO1. As to expression, expressed in the testes (at protein level).

It carries out the reaction (2R)-2-phosphoglycerate = (2R)-3-phosphoglycerate. It catalyses the reaction (2R)-3-phospho-glyceroyl phosphate = (2R)-2,3-bisphosphoglycerate + H(+). In terms of biological role, interconversion of 3- and 2-phosphoglycerate with 2,3-bisphosphoglycerate as the primer of the reaction. Can also catalyze the reaction of EC 5.4.2.4 (synthase), but with a reduced activity. This chain is Phosphoglycerate mutase 2 (Pgam2), found in Mus musculus (Mouse).